A 220-amino-acid chain; its full sequence is Iron-sulfur cluster repair protein YtfE (220 aa).

The protein belongs to the RIC family. YtfE subfamily. In terms of assembly, homodimer.

The protein localises to the cytoplasm. Functionally, di-iron-containing protein involved in the repair of iron-sulfur clusters damaged by oxidative and nitrosative stress conditions. This is Iron-sulfur cluster repair protein YtfE from Shigella boydii serotype 4 (strain Sb227).